We begin with the raw amino-acid sequence, 350 residues long: Histidinol-phosphate aminotransferase (350 aa).

An N6-(pyridoxal phosphate)lysine modification is found at Lys209.

The protein belongs to the class-II pyridoxal-phosphate-dependent aminotransferase family. Histidinol-phosphate aminotransferase subfamily. As to quaternary structure, homodimer. Pyridoxal 5'-phosphate is required as a cofactor.

The catalysed reaction is L-histidinol phosphate + 2-oxoglutarate = 3-(imidazol-4-yl)-2-oxopropyl phosphate + L-glutamate. It participates in amino-acid biosynthesis; L-histidine biosynthesis; L-histidine from 5-phospho-alpha-D-ribose 1-diphosphate: step 7/9. This Citrifermentans bemidjiense (strain ATCC BAA-1014 / DSM 16622 / JCM 12645 / Bem) (Geobacter bemidjiensis) protein is Histidinol-phosphate aminotransferase.